The sequence spans 452 residues: AP-4 complex subunit mu-1 (452 aa).

In terms of domain architecture, MHD spans 184 to 451; that stretch reads KNEVFLDVVE…LSHSDAYVIR (268 aa).

This sequence belongs to the adaptor complexes medium subunit family. Adaptor protein complex 4 (AP-4) is a heterotetramer composed of two large adaptins (epsilon-type subunit AP4E1 and beta-type subunit AP4B1), a medium adaptin (mu-type subunit AP4M1) and a small adaptin (sigma-type AP4S1). Interacts with tyrosine-based sorting signals on the cytoplasmic tail of cargo proteins such as APP, ATG9A, LAMP2 and NAGPA. Interacts with the C-terminal domain of GRID2. Interacts with GRIA1 and GRIA2; the interaction is indirect via CACNG3. Interacts with CACNG3; CACNG3 associates GRIA1 and GRIA2 with the adaptor protein complex 4 (AP-4) to target them to the somatodendritic compartment of neurons. Interacts with HOOK1 and HOOK2; the interactions are direct, mediate the interaction between FTS-Hook-FHIP (FHF) complex and AP-4 and the perinuclear distribution of AP-4.

The protein localises to the golgi apparatus. Its subcellular location is the trans-Golgi network membrane. The protein resides in the early endosome. Component of the adaptor protein complex 4 (AP-4). Adaptor protein complexes are vesicle coat components involved both in vesicle formation and cargo selection. They control the vesicular transport of proteins in different trafficking pathways. AP-4 forms a non clathrin-associated coat on vesicles departing the trans-Golgi network (TGN) and may be involved in the targeting of proteins from the trans-Golgi network (TGN) to the endosomal-lysosomal system. It is also involved in protein sorting to the basolateral membrane in epithelial cells and the proper asymmetric localization of somatodendritic proteins in neurons. Within AP-4, the mu-type subunit AP4M1 is directly involved in the recognition and binding of tyrosine-based sorting signals found in the cytoplasmic part of cargos. The adaptor protein complex 4 (AP-4) may also recognize other types of sorting signal. The polypeptide is AP-4 complex subunit mu-1 (Canis lupus familiaris (Dog)).